A 78-amino-acid chain; its full sequence is TP53-regulated inhibitor of apoptosis 1-A (78 aa).

Positions 1–52 form a coiled coil; sequence MNSVGEECTDMKRDYDQCFNRWFAEKFLKGAGSGDPCTELFRRYRECVQKAI. The region spanning 5–55 is the CHCH domain; it reads GEECTDMKRDYDQCFNRWFAEKFLKGAGSGDPCTELFRRYRECVQKAIKDK. 2 consecutive short sequence motifs (cx9C motif) follow at residues 8-18 and 37-47; these read CTDMKRDYDQC and CTELFRRYREC. Cystine bridges form between C8-C47 and C18-C37.

The protein belongs to the TRIAP1/MDM35 family. As to quaternary structure, monomer. Forms a complex with prelid1 in the mitochondrion intermembrane space. Interacts with prelid3a.

The protein resides in the mitochondrion. The protein localises to the mitochondrion intermembrane space. The catalysed reaction is a 1,2-diacyl-sn-glycero-3-phosphate(in) = a 1,2-diacyl-sn-glycero-3-phosphate(out). In terms of biological role, involved in the modulation of the mitochondrial apoptotic pathway by ensuring the accumulation of cardiolipin (CL) in mitochondrial membranes. The triap1:prelid1 complex probably functions as a phosphatidic acid (PA) transporter across the mitochondrion intermembrane space to provide PA for cardiolipin CL synthesis in the inner membrane. Likewise, the triap1:prelid3a complex mediates the transfer of phosphatidic acid (PA) between liposomes (in vitro) and probably functions as a PA transporter across the mitochondrion intermembrane space (in vivo). Mediates cell survival by inhibiting activation of caspase-9 which prevents induction of apoptosis. Required for pronephros development; probably involved at an early stage in the formation of pronephric components derived from the somatic layer. The chain is TP53-regulated inhibitor of apoptosis 1-A (triap1-a) from Xenopus laevis (African clawed frog).